A 1497-amino-acid polypeptide reads, in one-letter code: MMANWVGARPLLILSVLLGYCVSIKAQEQENDEYDEEIACTQHGQMYLNRDIWKPSPCQICVCDNGAILCDKIECPEVLNCANPITPTGECCPVCPQTGGGDTSFGRGRKGQKGEPGLVPVVTGIRGRPGPAGPPGSQGPRGDRGPKGRPGPRGPQGIDGEPGVPGQPGAPGPPGHPSHPGPDGMSRPFSAQMAGLDEKSGLGSQVGLMPGSVGPVGPRGPQGLQGQQGGVGPAGPPGEPGEPGPMGPIGSRGPEGPPGKPGEDGEPGRNGNTGEVGFSGSPGARGFPGAPGLPGLKGHRGHKGLEGPKGEIGAPGAKGEAGPTGPMGAMGPLGPRGMPGERGRLGPQGAPGKRGAHGMPGKPGPMGPLGIPGSSGFPGNPGMKGEAGPTGARGPEGPQGQRGETGPPGPAGSQGLPGAVGTDGTPGAKGPTGSAGTSGPPGLAGPPGSPGPQGSTGPQGIRGQSGDPGVPGFKGEAGPKGEPGPHGIQGPIGPPGEEGKRGPRGDPGTVGPPGPMGERGAPGNRGFPGSDGLPGPKGAQGERGPVGSSGPKGGQGDPGRPGEPGLPGARGLTGNPGVQGPEGKLGPLGAPGEDGRPGPPGSIGIRGQPGSMGLPGPKGSSGDLGKPGEAGNAGVPGQRGAPGKDGEVGPSGPVGPPGLAGERGEQGPPGPTGFQGLPGPPGPPGEGGKAGDQGVPGEPGAVGPLGPRGERGNPGERGEPGITGLPGEKGMAGGHGPDGPKGNPGPTGTIGDTGPPGLQGMPGERGIAGTPGPKGDRGGIGEKGAEGTAGNDGARGLPGPLGPPGPAGPTGEKGEPGPRGLVGPPGSRGNPGSRGENGPTGAVGFAGPQGPDGQPGVKGEPGEPGQKGDAGSPGPQGLAGSPGPHGPHGVPGLKGGRGTQGPPGATGFPGSAGRVGPPGPAGAPGPAGPAGEPGKEGPPGLRGDPGSHGRVGDRGPAGPPGSPGDKGDPGEDGQPGPDGPPGPAGTTGQRGIVGMPGQRGERGMPGLPGPAGTPGKVGPTGATGDKGPPGPVGPPGSNGPVGEPGPEGPAGNDGTPGRDGAVGERGDRGDPGPAGLPGSQGAPGTPGPVGAPGDAGQRGEPGSRGPVGPPGRAGKRGLPGPQGPRGDKGDNGDRGDRGQKGHRGFTGLQGLPGPPGPNGEQGSAGIPGPFGPRGPPGPVGPSGKEGNPGPLGPIGPPGVRGSVGEAGPEGPPGEPGPPGPPGPPGHLTAALGDIMGHYDENMPDPLPEFTEDQAAPDDTNKTDPGIHVTLKSLSSQIETMRSPDGSKKHPARTCDDLKLCHPTKQSGEYWIDPNQGSAEDAIKVYCNMETGETCISANPASVPRKTWWASKSPDNKPVWYGLDMNRGSQFTYGDYQSPNTAITQMTFLRLLSKEASQNLTYICRNTVGYMDDQAKNLKKAVVLKGSNDLEIKGEGNIRFRYTVLQDTCSKRNGNVGKTIFEYRTQNVARLPIIDVGPVDIGNADQEFGLDIGPVCFM.

An N-terminal signal peptide occupies residues 1 to 26 (MMANWVGARPLLILSVLLGYCVSIKA). A VWFC domain is found at 38–96 (IACTQHGQMYLNRDIWKPSPCQICVCDNGAILCDKIECPEVLNCANPITPTGECCPVCP). The tract at residues 103 to 1265 (TSFGRGRKGQ…PDDTNKTDPG (1163 aa)) is disordered. The short motif at 141–143 (RGD) is the Cell attachment site element. Over residues 155–164 (PQGIDGEPGV) the composition is skewed to low complexity. Over residues 168-180 (PGAPGPPGHPSHP) the composition is skewed to pro residues. The segment covering 210–225 (PGSVGPVGPRGPQGLQ) has biased composition (low complexity). Residues 234–246 (AGPPGEPGEPGPM) are compositionally biased toward pro residues. A 4-hydroxyproline mark is found at Pro288, Pro291, and Pro294. Composition is skewed to low complexity over residues 320 to 338 (EAGPTGPMGAMGPLGPRGM) and 425 to 441 (TPGAKGPTGSAGTSGPP). A Cell attachment site motif is present at residues 504–506 (RGD). The segment covering 550-559 (GPKGGQGDPG) has biased composition (gly residues). Residues 602–611 (SIGIRGQPGS) are compositionally biased toward low complexity. 4-hydroxyproline occurs at positions 609 and 615. Residues 708–719 (RGERGNPGERGE) are compositionally biased toward basic and acidic residues. Residues 730 to 739 (GMAGGHGPDG) show a composition bias toward gly residues. Positions 744–756 (PGPTGTIGDTGPP) are enriched in low complexity. Basic and acidic residues predominate over residues 774–785 (KGDRGGIGEKGA). 2 stretches are compositionally biased toward low complexity: residues 824–839 (PPGSRGNPGSRGENGP) and 878–891 (LAGSPGPHGPHGVP). Gly residues predominate over residues 892 to 901 (GLKGGRGTQG). The span at 917–927 (PPGPAGAPGPA) shows a compositional bias: pro residues. Short sequence motifs (cell attachment site) lie at residues 942-944 (RGD), 1065-1067 (RGD), and 1068-1070 (RGD). The segment covering 1061 to 1070 (AVGERGDRGD) has biased composition (basic and acidic residues). The span at 1091–1112 (APGDAGQRGEPGSRGPVGPPGR) shows a compositional bias: low complexity. 2 consecutive short sequence motifs (cell attachment site) follow at residues 1125-1127 (RGD) and 1134-1136 (RGD). Residues 1125–1139 (RGDKGDNGDRGDRGQ) are compositionally biased toward basic and acidic residues. 2 stretches are compositionally biased toward pro residues: residues 1169-1179 (PFGPRGPPGPV) and 1209-1224 (EGPPGEPGPPGPPGPP). Residues 1228-1497 (TAALGDIMGH…GLDIGPVCFM (270 aa)) constitute a propeptide, C-terminal propeptide. The N-linked (GlcNAc...) asparagine glycan is linked to Asn1260. Residues 1264-1497 (PGIHVTLKSL…GLDIGPVCFM (234 aa)) enclose the Fibrillar collagen NC1 domain. 3 disulfide bridges follow: Cys1294–Cys1326, Cys1334–Cys1495, and Cys1403–Cys1448. Asp1312, Asn1314, Gln1315, and Asp1320 together coordinate Ca(2+). Asn1398 is a glycosylation site (N-linked (GlcNAc...) asparagine).

The protein belongs to the fibrillar collagen family. As to quaternary structure, trimers of two alpha 1(V) and one alpha 2(V) chains expressed in most tissues and trimers of one alpha 1(V), one alpha 2(V), and one alpha 3(V) chains with a more limited distribution of expression. In terms of processing, prolines at the third position of the tripeptide repeating unit (G-X-P) are hydroxylated in some or all of the chains. Probably 3-hydroxylated on prolines by LEPREL1. Post-translationally, hydroxylation on proline residues within the sequence motif, GXPG, is most likely to be 4-hydroxy as this fits the requirement for 4-hydroxylation in vertebrates.

It localises to the secreted. It is found in the extracellular space. Its subcellular location is the extracellular matrix. In terms of biological role, type V collagen is a member of group I collagen (fibrillar forming collagen). It is a minor connective tissue component of nearly ubiquitous distribution. Type V collagen binds to DNA, heparan sulfate, thrombospondin, heparin, and insulin. Type V collagen is a key determinant in the assembly of tissue-specific matrices. This is Collagen alpha-2(V) chain from Mus musculus (Mouse).